The following is a 26-amino-acid chain: GTP-binding protein Rheb (26 aa).

5 residues coordinate GTP: Ser-1, Ser-2, Val-13, Tyr-16, and Thr-19. Ser-1 is a binding site for Mg(2+). The Effector region signature appears at 16–24 (YDPTIENTF). Thr-19 lines the Mg(2+) pocket.

Belongs to the small GTPase superfamily. Rheb family.

The catalysed reaction is GTP + H2O = GDP + phosphate + H(+). Binds GTP and exhibits intrinsic GTPase activity. The sequence is that of GTP-binding protein Rheb from Crocodylus siamensis (Siamese crocodile).